We begin with the raw amino-acid sequence, 435 residues long: 3-ketoacyl-CoA thiolase (435 aa).

Cysteine 98 serves as the catalytic Acyl-thioester intermediate. Active-site proton acceptor residues include histidine 391 and cysteine 421.

It belongs to the thiolase-like superfamily. Thiolase family. Heterotetramer of two alpha chains (FadJ) and two beta chains (FadI).

The protein localises to the cytoplasm. The catalysed reaction is an acyl-CoA + acetyl-CoA = a 3-oxoacyl-CoA + CoA. The protein operates within lipid metabolism; fatty acid beta-oxidation. Functionally, catalyzes the final step of fatty acid oxidation in which acetyl-CoA is released and the CoA ester of a fatty acid two carbons shorter is formed. This is 3-ketoacyl-CoA thiolase from Vibrio vulnificus (strain YJ016).